An 838-amino-acid chain; its full sequence is MSLSHLYRDGEGHLDDDDDDERENFEITDWDLQNEFNPNRQRHWQTKEEATYGVWAERDSDEERPSFGGKRARDYSAPVNFISAGLKKGAAEEADSEDSDAEEKPVKQEDFPKDLGPKKLKTGGNFKPSQKGFSGGTKSFMDFGSWERHTKGIGQKLLQKMGYVPGRGLGKNAQGIINPIEAKQRKGKGAVGAYGSERTTQSLQDFPVADSEEEAEEEFQKELSQWRKDPSGSKKKPKYSYKTVEELKAKGRVSKKLTAPQKELSQVKVIDMTGREQKVYYSYSQISHKHSVPDEGVPLLAQLPPTAGKEARMPGFALPELEHNLQLLIERTEQEIIQSDRQLQYERDMVVSLSHELEKTAEVLAHEERVISNLSKVLALVEECERRMQPHGADPLTLDECARIFETLQDKYYEEYRLADRADLAVAIVYPLVKDYFKDWHPLEDGSYGTQIISKWKSLLENDQLLSHSSQDLSSDAFHRLMWEVWMPFVRNVVAQWQPRNCEPMVDFLDSWAHIIPVWILDNILDQLIFPKLQKEVDNWNPLTDTVPIHSWIHPWLPLMQARLEPLYSPVRSKLSSALQKWHPSDASAKLILQPWKEVLTPGSWEAFMLRNIVPKLGMCLGELVINPHQQHMDAFYWVMDWEGMISVSSLVGLLEKHFFPKWLQVLCSWLSNSPNYEEITKWYLGWKSMFSDQVLAHPSVKDKFNEALDIMNRAVSSNVGAYMQPGARENIAYLTHTERRKDFQYEAMQERREAENMAQRGIGVAASSVPMNFKDLIETKAEEHNIVFMPVIGKRHEGKQLYTFGRIVIYIDRGVVFVQGEKTWVPTSLQSLIDMAK.

The segment covering 1-13 (MSLSHLYRDGEGH) has biased composition (basic and acidic residues). Positions 1–51 (MSLSHLYRDGEGHLDDDDDDERENFEITDWDLQNEFNPNRQRHWQTKEEAT) are required for interaction with DHX15. Disordered stretches follow at residues 1–74 (MSLS…RARD) and 86–137 (LKKG…SGGT). Ser2 carries the post-translational modification Phosphoserine. Over residues 14–29 (LDDDDDDERENFEITD) the composition is skewed to acidic residues. Basic and acidic residues predominate over residues 45–65 (QTKEEATYGVWAERDSDEERP). A phosphoserine mark is found at Ser60, Ser96, and Ser99. Acidic residues predominate over residues 92-101 (EEADSEDSDA). A compositionally biased stretch (basic and acidic residues) spans 102–117 (EEKPVKQEDFPKDLGP). Ser145 bears the Phosphoserine mark. The G-patch domain occupies 150–196 (TKGIGQKLLQKMGYVPGRGLGKNAQGIINPIEAKQRKGKGAVGAYGS). The interval 193–237 (AYGSERTTQSLQDFPVADSEEEAEEEFQKELSQWRKDPSGSKKKP) is disordered. Position 211 is a phosphoserine (Ser211). The segment covering 218–232 (EFQKELSQWRKDPSG) has biased composition (basic and acidic residues). Residues 701 to 706 (VKDKFN) carry the Nuclear localization signal motif. The tract at residues 711 to 735 (IMNRAVSSNVGAYMQPGARENIAYL) is required for nuclear speckle localization.

Belongs to the TFP11/STIP family. Identified in the spliceosome C complex. Found in the Intron Large (IL) complex, a post-mRNA release spliceosomal complex containing the excised intron, U2, U5 and U6 snRNPs, and splicing factors. Interacts with TUFT1. Interacts with DHX15; indicative for a recruitment of DHX15 to the IL complex. Interacts with GCFC2. In terms of tissue distribution, widely expressed. In tooth it is expressed in ameloblasts and odontoblasts.

Its subcellular location is the cytoplasm. It is found in the nucleus. Involved in pre-mRNA splicing, specifically in spliceosome disassembly during late-stage splicing events. Intron turnover seems to proceed through reactions in two lariat-intron associated complexes termed Intron Large (IL) and Intron Small (IS). In cooperation with DHX15 seems to mediate the transition of the U2, U5 and U6 snRNP-containing IL complex to the snRNP-free IS complex leading to efficient debranching and turnover of excised introns. May play a role in the differentiation of ameloblasts and odontoblasts or in the forming of the enamel extracellular matrix. The polypeptide is Tuftelin-interacting protein 11 (Tfip11) (Mus musculus (Mouse)).